A 129-amino-acid chain; its full sequence is Small ribosomal subunit protein uS11 (129 aa).

It belongs to the universal ribosomal protein uS11 family. In terms of assembly, part of the 30S ribosomal subunit. Interacts with proteins S7 and S18. Binds to IF-3.

Its function is as follows. Located on the platform of the 30S subunit, it bridges several disparate RNA helices of the 16S rRNA. Forms part of the Shine-Dalgarno cleft in the 70S ribosome. This chain is Small ribosomal subunit protein uS11, found in Stenotrophomonas maltophilia (strain R551-3).